A 302-amino-acid chain; its full sequence is MKKKDFVSITDCSKQDILHLIERSAYFERNLNQLLLKDKICATLFFEPSTRTRLSFETAINRLNGRIIGFSDVHTTSSSKGETLKDTIKIVSNYADVIIMRHYLEGAARYASKITDVPIVNAGDGANQHPSQTLLDIYSMYKTQGTLYNLTITIVGDLKYGRTVHSLLNGMSYFNPTFHFIAPEELKLPIIYKQFMDENSIQYFDHSDFLVDIINQSDILYMTRVQRERFNDLIEYEKVKNVYVLSNDMLADSKDNLRILHPLPRVGEITSDVDTNPKAYYFEQARNGIFARQAIICDVLGL.

Residues arginine 51 and threonine 52 each contribute to the carbamoyl phosphate site. Lysine 80 contributes to the L-aspartate binding site. Carbamoyl phosphate-binding residues include arginine 101, histidine 129, and glutamine 132. L-aspartate is bound by residues arginine 162 and arginine 224. 2 residues coordinate carbamoyl phosphate: leucine 263 and proline 264.

This sequence belongs to the aspartate/ornithine carbamoyltransferase superfamily. ATCase family. As to quaternary structure, heterododecamer (2C3:3R2) of six catalytic PyrB chains organized as two trimers (C3), and six regulatory PyrI chains organized as three dimers (R2).

It catalyses the reaction carbamoyl phosphate + L-aspartate = N-carbamoyl-L-aspartate + phosphate + H(+). It functions in the pathway pyrimidine metabolism; UMP biosynthesis via de novo pathway; (S)-dihydroorotate from bicarbonate: step 2/3. Catalyzes the condensation of carbamoyl phosphate and aspartate to form carbamoyl aspartate and inorganic phosphate, the committed step in the de novo pyrimidine nucleotide biosynthesis pathway. The chain is Aspartate carbamoyltransferase catalytic subunit from Azobacteroides pseudotrichonymphae genomovar. CFP2.